The sequence spans 635 residues: Sodium- and chloride-dependent creatine transporter 1 (635 aa).

Positions 1–28 (MAKKSAENGIYSVSGDEKKGPLIAPGPD) are disordered. Residues 1–60 (MAKKSAENGIYSVSGDEKKGPLIAPGPDGAPAKGDGPVGLGTPGGRLAVPPRETWTRQMD) are Cytoplasmic-facing. Phosphothreonine is present on threonine 42. A helical membrane pass occupies residues 61 to 81 (FIMSCVGFAVGLGNVWRFPYL). At 82 to 87 (CYKNGG) the chain is on the extracellular side. A helical transmembrane segment spans residues 88–108 (GVFLIPYVLIALVGGIPIFFL). Topologically, residues 109–138 (EISLGQFMKAGSINVWNICPLFKGLGYASM) are cytoplasmic. The helical transmembrane segment at 139–159 (VIVFYCNTYYIMVLAWGFYYL) threads the bilayer. The Extracellular segment spans residues 160-230 (VKSFTTTLPW…LSGGLEVPGA (71 aa)). Residues asparagine 192 and asparagine 197 are each glycosylated (N-linked (GlcNAc...) asparagine). The chain crosses the membrane as a helical span at residues 231 to 251 (LNWEVTLCLLACWVLVYFCVW). The Cytoplasmic portion of the chain corresponds to 252 to 269 (KGVKSTGKIVYFTATFPY). Residues 270–290 (VVLVVLLVRGVLLPGALDGII) traverse the membrane as a helical segment. Residues 291–304 (YYLKPDWSKLGSPQ) lie on the Extracellular side of the membrane. Residues 305–325 (VWIDAGTQIFFSYAIGLGALT) form a helical membrane-spanning segment. Topologically, residues 326–341 (ALGSYNRFNNNCYKDA) are cytoplasmic. A helical membrane pass occupies residues 342 to 362 (IILALINSGTSFFAGFVVFSI). Residues 363–394 (LGFMAAEQGVHISKVAESGPGLAFIAYPRAVT) are Extracellular-facing. Residues 395–415 (LMPVAPLWAALFFFMLLLLGL) traverse the membrane as a helical segment. At 416-444 (DSQFVGVEGFITGLLDLLPASYYFRFQRE) the chain is on the cytoplasmic side. Residues 445–465 (ISVALCCALCFVIDLSMVTDG) traverse the membrane as a helical segment. Over 466–479 (GMYVFQLFDYYSAS) the chain is Extracellular. The helical transmembrane segment at 480–500 (GTTLLWQAFWECVVVAWVYGA) threads the bilayer. At 501–520 (DRFMDDIACMIGYRPCPWMK) the chain is on the cytoplasmic side. The chain crosses the membrane as a helical span at residues 521–541 (WCWSFFTPLVCMGIFIFNVVY). Over 542-560 (YEPLVYNNTYVYPWWGEAM) the chain is Extracellular. A glycan (N-linked (GlcNAc...) asparagine) is linked at asparagine 548. A helical membrane pass occupies residues 561–581 (GWAFALSSMLCVPLHLLGCLL). Topologically, residues 582 to 635 (RAKGTMAERWQHLTQPIWGLHHLEYRAQDADVRGLTTLTPVSESSKVVVVESVM) are cytoplasmic. 2 positions are modified to phosphothreonine: threonine 617 and threonine 620. Residue serine 623 is modified to Phosphoserine.

The protein belongs to the sodium:neurotransmitter symporter (SNF) (TC 2.A.22) family. SLC6A8 subfamily. In terms of processing, glycosylated. In terms of tissue distribution, predominantly expressed in skeletal muscle and kidney. Also found in brain, heart, colon, testis and prostate.

Its subcellular location is the cell membrane. It localises to the apical cell membrane. It catalyses the reaction creatine(out) + chloride(out) + 2 Na(+)(out) = creatine(in) + chloride(in) + 2 Na(+)(in). Functionally, creatine:sodium symporter which mediates the uptake of creatine. Plays an important role in supplying creatine to the brain via the blood-brain barrier. This chain is Sodium- and chloride-dependent creatine transporter 1 (SLC6A8), found in Homo sapiens (Human).